Consider the following 360-residue polypeptide: Photosystem II protein D1 1 (360 aa).

The next 3 helical transmembrane spans lie at 29-46 (YVGW…SATI), 118-133 (HFLI…EWEL), and 142-156 (WICI…AAAA). Histidine 118 serves as a coordination point for chlorophyll a. Tyrosine 126 contributes to the pheophytin a binding site. Aspartate 170 and glutamate 189 together coordinate [CaMn4O5] cluster. The helical transmembrane segment at 197-218 (FHMLGVAGVFGGSLFSAMHGSL) threads the bilayer. Histidine 198 is a binding site for chlorophyll a. A quinone is bound by residues histidine 215 and 264–265 (SF). Histidine 215 contacts Fe cation. Histidine 272 is a Fe cation binding site. Residues 274–288 (FLAAWPVIGIWFTAL) form a helical membrane-spanning segment. The [CaMn4O5] cluster site is built by histidine 332, glutamate 333, aspartate 342, and alanine 344. A propeptide spanning residues 345–360 (GTESAPVAVGNADLNG) is cleaved from the precursor.

This sequence belongs to the reaction center PufL/M/PsbA/D family. PSII is composed of 1 copy each of membrane proteins PsbA, PsbB, PsbC, PsbD, PsbE, PsbF, PsbH, PsbI, PsbJ, PsbK, PsbL, PsbM, PsbT, PsbX, Psb30/Ycf12, peripheral proteins PsbO, CyanoQ (PsbQ), PsbU, PsbV and a large number of cofactors. It forms dimeric complexes. The cofactor is The D1/D2 heterodimer binds P680, chlorophylls that are the primary electron donor of PSII, and subsequent electron acceptors. It shares a non-heme iron and each subunit binds pheophytin, quinone, additional chlorophylls, carotenoids and lipids. D1 provides most of the ligands for the Mn4-Ca-O5 cluster of the oxygen-evolving complex (OEC). There is also a Cl(-1) ion associated with D1 and D2, which is required for oxygen evolution. The PSII complex binds additional chlorophylls, carotenoids and specific lipids.. Tyr-161 forms a radical intermediate that is referred to as redox-active TyrZ, YZ or Y-Z. Post-translationally, C-terminally processed by CtpA; processing is essential to allow assembly of the oxygen-evolving complex and thus photosynthetic growth.

It localises to the cell inner membrane. It catalyses the reaction 2 a plastoquinone + 4 hnu + 2 H2O = 2 a plastoquinol + O2. Functionally, photosystem II (PSII) is a light-driven water:plastoquinone oxidoreductase that uses light energy to abstract electrons from H(2)O, generating O(2) and a proton gradient subsequently used for ATP formation. It consists of a core antenna complex that captures photons, and an electron transfer chain that converts photonic excitation into a charge separation. The D1/D2 (PsbA/PsbD) reaction center heterodimer binds P680, the primary electron donor of PSII as well as several subsequent electron acceptors. This is Photosystem II protein D1 1 from Gloeobacter violaceus (strain ATCC 29082 / PCC 7421).